The chain runs to 1839 residues: Nuclear pore complex protein DDB_G0274915 (1839 aa).

Polar residues-rich tracts occupy residues 1–27 (MNGR…NTIN) and 35–54 (NGSL…QTNK). Disordered stretches follow at residues 1 to 54 (MNGR…QTNK), 78 to 150 (DESS…ISDD), 325 to 367 (KQFD…PNAD), 480 to 568 (PLNK…FSTT), 589 to 636 (TTIA…GGGV), 657 to 705 (VSTS…DVPG), 739 to 810 (TTTT…DSKT), 818 to 837 (PTTE…SSLF), 846 to 1106 (TTPS…FSSN), and 1129 to 1839 (TTAT…AKKK). Residues 80–90 (SSSSSSSSSSS) are compositionally biased toward low complexity. A compositionally biased stretch (polar residues) spans 91–101 (YDDGNNIPQKG). Low complexity-rich tracts occupy residues 102-148 (SSTT…INIS) and 329-343 (DNNN…SIYN). Positions 344–354 (RQSIYSPNSKI) are enriched in polar residues. Composition is skewed to low complexity over residues 495–568 (TYAT…FSTT) and 589–607 (TTIA…SSSS). Positions 616-628 (MFTSDSNKSNLFS) are enriched in polar residues. Low complexity-rich tracts occupy residues 658–671 (STST…SKSS) and 739–760 (TTTT…TTDK). The span at 761-773 (SSADKSSADKSST) shows a compositional bias: basic and acidic residues. Low complexity-rich tracts occupy residues 774–803 (DKST…TTTT), 827–837 (PTTSLTSSSLF), and 846–871 (TTPS…NTTT). Acidic residues-rich tracts occupy residues 896 to 923 (ESDE…EAEE) and 944 to 958 (LEAE…DSDE). Low complexity-rich tracts occupy residues 1005-1021 (GSSL…SFLT) and 1046-1060 (SSSS…IPTT). Over residues 1061–1070 (SKKEKIDDKP) the composition is skewed to basic and acidic residues. Positions 1071–1092 (STTTTTTTTSLFGSTTTSGLFS) are enriched in low complexity. Residues 1093-1106 (NPSTTSTGSLFSSN) show a composition bias toward polar residues. 2 stretches are compositionally biased toward low complexity: residues 1129–1242 (TTAT…FGST) and 1250–1292 (ATTT…GLFG). Residues 1293 to 1310 (ASSSTTPSTGLFGSATTP) are compositionally biased toward polar residues. Low complexity-rich tracts occupy residues 1311–1384 (STGL…TTPP) and 1397–1498 (LFGT…TTAT). Over residues 1507 to 1521 (TAPSTGLFGSTTATN) the composition is skewed to polar residues. Over residues 1522–1673 (PSTGLFGSTT…SSTPFGASPF (152 aa)) the composition is skewed to low complexity. Residues 1676-1708 (PTSTSSPPFGAPTSASSTPFGAPQISTSSSTNL) are compositionally biased toward polar residues. Residues 1712 to 1810 (ASSSTAAPSF…PFGSTPSTAP (99 aa)) are compositionally biased toward low complexity.

The chain is Nuclear pore complex protein DDB_G0274915 from Dictyostelium discoideum (Social amoeba).